The primary structure comprises 135 residues: MADNFNFELVSPERLLLSEMVTEVVIPATEGEMTVMANHAPTMTTIKPGVVSVRSASGKKQDYVVFGGFADILPTGCTLLAESAVPVEELQKDELTRRIEAARQELEHAELHEHKSKLEHFIMEMTHLRGVVEQD.

The protein belongs to the ATPase epsilon chain family. As to quaternary structure, F-type ATPases have 2 components, CF(1) - the catalytic core - and CF(0) - the membrane proton channel. CF(1) has five subunits: alpha(3), beta(3), gamma(1), delta(1), epsilon(1). CF(0) has three main subunits: a, b and c.

Its subcellular location is the cell inner membrane. Its function is as follows. Produces ATP from ADP in the presence of a proton gradient across the membrane. This chain is ATP synthase epsilon chain, found in Rhizobium johnstonii (strain DSM 114642 / LMG 32736 / 3841) (Rhizobium leguminosarum bv. viciae).